The sequence spans 438 residues: Vasoactive intestinal polypeptide receptor 2 (438 aa).

An N-terminal signal peptide occupies residues 1 to 23; the sequence is MRTLLPPALLTCWLLAPVNSIHP. Residues 24–124 are Extracellular-facing; that stretch reads ECRFHLEIQE…EDESKITFYI (101 aa). Intrachain disulfides connect Cys38-Cys61, Cys52-Cys93, and Cys75-Cys109. 3 N-linked (GlcNAc...) asparagine glycosylation sites follow: Asn58, Asn88, and Asn92. The helical transmembrane segment at 125-150 threads the bilayer; sequence LVKAIYTLGYSVSLMSLATGSIILCL. At 151–158 the chain is on the cytoplasmic side; that stretch reads FRKLHCTR. A helical membrane pass occupies residues 159–180; it reads NYIHLNLFLSFILRAISVLVKD. Residues 181-203 are Extracellular-facing; the sequence is DVLYSSSGTLHCPDQPSSWVGCK. Cysteines 202 and 271 form a disulfide. A helical transmembrane segment spans residues 204–228; that stretch reads LSLVFLQYCIMANFFWLLVEGLYLH. Over 229–239 the chain is Cytoplasmic; that stretch reads TLLVAMLPPRR. A helical membrane pass occupies residues 240–261; sequence CFLAYLLIGWGLPTVCIGAWTA. Residues 262-280 lie on the Extracellular side of the membrane; that stretch reads ARLYLEDTGCWDTNDHSVP. Residues 281 to 304 form a helical membrane-spanning segment; sequence WWVIRIPILISIIVNFVLFISIIR. Residues 305–325 lie on the Cytoplasmic side of the membrane; the sequence is ILLQKLTSPDVGGNDQSQYKR. The helical transmembrane segment at 326 to 346 threads the bilayer; the sequence is LAKSTLLLIPLFGVHYMVFAV. Over 347 to 354 the chain is Extracellular; it reads FPISISSK. Residues 355–378 traverse the membrane as a helical segment; sequence YQILFELCLGSFQGLVVAVLYCFL. Topologically, residues 379 to 438 are cytoplasmic; that stretch reads NSEVQCELKRKWRSRCPTPSASRDYRVCGSSFSRNGSEGALQFHRGSRAQSFLQTETSVI.

This sequence belongs to the G-protein coupled receptor 2 family. As to quaternary structure, interacts with ADCYAP1/PACAP (via N-terminal extracellular domain); activated by PACAP27 and CAPAC38 neuropeptides. Interacts with VIP; the interaction results in VIPR1 activation. Expressed in CD4+ T-cells, but not in CD8+ T-cells. Expressed in the T-cell lines Jurkat, Peer, MOLT-4, HSB, YT and SUP-T1, but not in the T-cell lines HARRIS and HuT 78.

It localises to the cell membrane. G protein-coupled receptor activated by the neuropeptides vasoactive intestinal peptide (VIP) and pituitary adenylate cyclase-activating polypeptide (ADCYAP1/PACAP). Binds VIP and both PACAP27 and PACAP38 bioactive peptides with the following order of potency PACAP38 = VIP &gt; PACAP27. Ligand binding causes a conformation change that triggers signaling via guanine nucleotide-binding proteins (G proteins) and modulates the activity of downstream effectors. Activates cAMP-dependent pathway. May be coupled to phospholipase C. This chain is Vasoactive intestinal polypeptide receptor 2, found in Homo sapiens (Human).